Here is a 388-residue protein sequence, read N- to C-terminus: Leucine aminopeptidase 1 (388 aa).

The signal sequence occupies residues 1–19 (MKSLSLLALAAIAPPAAVA). The propeptide occupies 20–88 (AVVDRQVPFE…SAKSHERIQV (69 aa)). N-linked (GlcNAc...) asparagine glycosylation is present at Asn180. Zn(2+)-binding residues include His188, Asp207, Glu246, and Asp273. The cysteines at positions 322 and 326 are disulfide-linked. Residue His355 participates in Zn(2+) binding.

It belongs to the peptidase M28 family. M28E subfamily. In terms of assembly, monomer. It depends on Zn(2+) as a cofactor.

Its subcellular location is the secreted. Extracellular aminopeptidase that allows assimilation of proteinaceous substrates. The polypeptide is Leucine aminopeptidase 1 (LAP1) (Coccidioides posadasii (strain C735) (Valley fever fungus)).